A 471-amino-acid chain; its full sequence is 5-hydroxytryptamine receptor 2A (471 aa).

Residues 1 to 80 are Extracellular-facing; it reads MDILCEENTS…LQEKNWSALL (80 aa). Residue asparagine 38 is glycosylated (N-linked (GlcNAc...) asparagine). Residues 81-97 form a helical membrane-spanning segment; sequence TAVVIILTIAGNILVIM. Topologically, residues 98–111 are cytoplasmic; it reads AVSLEKKLQNATNY. Residues 112–137 traverse the membrane as a helical segment; the sequence is FLMSLAIADMLLGFLVMPVSMLTILY. The Extracellular portion of the chain corresponds to 138–146; the sequence is GYRWPLPSK. Residues 147–171 traverse the membrane as a helical segment; sequence LCAVWIYLDVLFSTASIMHLCAISL. Cysteine 148 and cysteine 227 are joined by a disulfide. Aspartate 155 contacts serotonin. Positions 172 to 174 match the DRY motif; important for ligand-induced conformation changes motif; sequence DRY. The Cytoplasmic portion of the chain corresponds to 172 to 191; it reads DRYVAIQNPIHHSRFNSRTK. The helical transmembrane segment at 192–215 threads the bilayer; sequence AFLKIIAVWTISVGISMPIPVFGL. The Extracellular segment spans residues 216 to 232; that stretch reads QDDSKVFKEGSCLLADD. A helical transmembrane segment spans residues 233-258; that stretch reads NFVLIGSFVSFFIPLTIMVITYFLTI. Over 259 to 322 the chain is Cytoplasmic; sequence KSLQKEATLC…QSISNEQKAC (64 aa). Serine 280 carries the post-translational modification Phosphoserine. Residues 323 to 348 traverse the membrane as a helical segment; sequence KVLGIVFSLFVVMWCPFFITNIMAVI. Serotonin is bound at residue asparagine 343. Cysteine 349 and cysteine 353 are joined by a disulfide. At 349 to 356 the chain is on the extracellular side; the sequence is CKESCNED. A helical membrane pass occupies residues 357–382; sequence VIGALLNVFVWIGYLSSAVNPLVYTL. The short motif at 376-380 is the NPxxY motif; important for ligand-induced conformation changes and signaling element; that stretch reads NPLVY. Residues 383–471 lie on the Cytoplasmic side of the membrane; it reads FNKTYRSAFS…DGVNEKVSCV (89 aa). A disordered region spans residues 450–471; sequence KQHSEDASKDNSDGVNEKVSCV. Positions 451-465 are enriched in basic and acidic residues; it reads QHSEDASKDNSDGVN. Positions 469 to 471 match the PDZ-binding motif; sequence SCV.

The protein belongs to the G-protein coupled receptor 1 family. As to quaternary structure, interacts (via C-terminus) with MPDZ and PATJ. May interact (via C-terminus) with MPP3, PRDX6, DLG4, DLG1, CASK, APBA1 and MAGI2. Interacts with GRM2 and DRD2; this may affect signaling.

The protein resides in the cell membrane. Its subcellular location is the cell projection. It is found in the dendrite. It localises to the axon. The protein localises to the cytoplasmic vesicle. The protein resides in the membrane. Its subcellular location is the caveola. It is found in the presynapse. Its activity is regulated as follows. G-protein coupled receptor activity is regulated by lipids: oleamide increases HTR2A-mediated activity. G-protein coupled receptor for 5-hydroxytryptamine (serotonin). Also functions as a receptor for various drugs and psychoactive substances, including mescaline, psilocybin, 1-(2,5-dimethoxy-4-iodophenyl)-2-aminopropane (DOI) and lysergic acid diethylamide (LSD). Ligand binding causes a conformation change that triggers signaling via guanine nucleotide-binding proteins (G proteins) and modulates the activity of downstream effectors. HTR2A is coupled to G(q)/G(11) G alpha proteins and activates phospholipase C-beta, releasing diacylglycerol (DAG) and inositol 1,4,5-trisphosphate (IP3) second messengers that modulate the activity of phosphatidylinositol 3-kinase and promote the release of Ca(2+) ions from intracellular stores, respectively. Beta-arrestin family members inhibit signaling via G proteins and mediate activation of alternative signaling pathways. Affects neural activity, perception, cognition and mood. Plays a role in the regulation of behavior, including responses to anxiogenic situations and psychoactive substances. Plays a role in intestinal smooth muscle contraction, and may play a role in arterial vasoconstriction. This chain is 5-hydroxytryptamine receptor 2A (HTR2A), found in Pongo pygmaeus (Bornean orangutan).